The primary structure comprises 316 residues: L-lactate dehydrogenase (316 aa).

Residues Val15, Asp37, Lys42, Tyr68, and Gly82–Leu83 each bind NAD(+). Residues Gln85, Arg91, and Asn123–Asp126 each bind substrate. Residues Ala121 to Asn123 and Thr146 contribute to the NAD(+) site. Asp151–Arg154 contributes to the substrate binding site. Residues Arg156 and His171 each contribute to the beta-D-fructose 1,6-bisphosphate site. The active-site Proton acceptor is His178. Tyr222 is modified (phosphotyrosine). A substrate-binding site is contributed by Thr231.

The protein belongs to the LDH/MDH superfamily. LDH family. Homotetramer.

It is found in the cytoplasm. The enzyme catalyses (S)-lactate + NAD(+) = pyruvate + NADH + H(+). Its pathway is fermentation; pyruvate fermentation to lactate; (S)-lactate from pyruvate: step 1/1. Allosterically activated by fructose 1,6-bisphosphate (FBP). Its function is as follows. Catalyzes the conversion of lactate to pyruvate. The protein is L-lactate dehydrogenase of Borrelia turicatae (strain 91E135).